The sequence spans 292 residues: MTNDNLYRYLFEGVSVRGELVQLGNTYQQIIASKEYPAPVQKLLGELLVATSLLTATLKFEGSITVQLQGDGPVRLAVINGDHEQKMRGVARWEGEVPTDGTIHDVIGKGHLVITITPTKGDRYQGVVGLEGDTLAESLEGYFANSEQLKTRIILRTGEFEGNAKAAGMLLQILPDGQGQEGDFEHLEQLTETVKDEELFGLDAQDVLYRLYHQEEVKLFDPQSVEFHCGCSRERSASAICSIERIEVEKIIADEGKVSLHCDYCGTSYDFDSIDVAALHENAAKNDRDQVH.

Cystine bridges form between Cys-229–Cys-231 and Cys-262–Cys-265.

This sequence belongs to the HSP33 family. Post-translationally, under oxidizing conditions two disulfide bonds are formed involving the reactive cysteines. Under reducing conditions zinc is bound to the reactive cysteines and the protein is inactive.

It is found in the cytoplasm. In terms of biological role, redox regulated molecular chaperone. Protects both thermally unfolding and oxidatively damaged proteins from irreversible aggregation. Plays an important role in the bacterial defense system toward oxidative stress. The sequence is that of 33 kDa chaperonin from Photobacterium profundum (strain SS9).